The sequence spans 247 residues: ATP synthase subunit a (247 aa).

6 helical membrane passes run 24–44, 82–102, 112–132, 141–161, 194–214, and 219–239; these read IAFT…SLLM, FFPF…VGII, IIVT…YGFY, LFVP…IEVI, MLGA…ALVV, and LELL…CIYI.

It belongs to the ATPase A chain family. In terms of assembly, F-type ATPases have 2 components, CF(1) - the catalytic core - and CF(0) - the membrane proton channel. CF(1) has five subunits: alpha(3), beta(3), gamma(1), delta(1), epsilon(1). CF(0) has three main subunits: a(1), b(2) and c(9-12). The alpha and beta chains form an alternating ring which encloses part of the gamma chain. CF(1) is attached to CF(0) by a central stalk formed by the gamma and epsilon chains, while a peripheral stalk is formed by the delta and b chains.

The protein localises to the cell inner membrane. Key component of the proton channel; it plays a direct role in the translocation of protons across the membrane. In Nitrobacter winogradskyi (strain ATCC 25391 / DSM 10237 / CIP 104748 / NCIMB 11846 / Nb-255), this protein is ATP synthase subunit a.